The sequence spans 742 residues: Glucosylceramidase (742 aa).

Residues asparagine 37 and asparagine 160 are each glycosylated (N-linked (GlcNAc...) asparagine). Glutamate 258 serves as the catalytic Proton donor. Residue asparagine 388 is glycosylated (N-linked (GlcNAc...) asparagine). Catalysis depends on glutamate 492, which acts as the Nucleophile. N-linked (GlcNAc...) asparagine glycans are attached at residues asparagine 552, asparagine 560, and asparagine 698. A helical transmembrane segment spans residues 701–721 (IAQILVAVVILLLGVLVAYYA).

This sequence belongs to the glycosyl hydrolase 5 (cellulase A) family.

The protein localises to the membrane. The catalysed reaction is a beta-D-glucosyl-(1&lt;-&gt;1')-N-acylsphing-4-enine + H2O = an N-acylsphing-4-enine + D-glucose. Functionally, specifically hydrolyzes the glucosidic linkage in glucosylceramide. May prevent accumulation of aberrent glucosylceramide containing immature ceramide. This Cryptococcus neoformans var. grubii serotype A (strain H99 / ATCC 208821 / CBS 10515 / FGSC 9487) (Filobasidiella neoformans var. grubii) protein is Glucosylceramidase.